The following is a 144-amino-acid chain: Putative sugar phosphate isomerase RC0402 (144 aa).

His-12 provides a ligand contact to substrate. His-101 serves as the catalytic Proton donor. A substrate-binding site is contributed by Arg-135.

The protein belongs to the LacAB/RpiB family.

The sequence is that of Putative sugar phosphate isomerase RC0402 from Rickettsia conorii (strain ATCC VR-613 / Malish 7).